Reading from the N-terminus, the 124-residue chain is 14 kDa phosphohistidine phosphatase (124 aa).

Substrate is bound at residue Lys20. His52 acts as the Proton acceptor in catalysis. 93-95 (SMG) contacts substrate.

The protein belongs to the janus family. In terms of assembly, monomer.

It localises to the cytoplasm. It carries out the reaction N(pros)-phospho-L-histidyl-[protein] + H2O = L-histidyl-[protein] + phosphate. It catalyses the reaction N(tele)-phospho-L-histidyl-[protein] + H2O = L-histidyl-[protein] + phosphate. Its function is as follows. Exhibits phosphohistidine phosphatase activity. The polypeptide is 14 kDa phosphohistidine phosphatase (Phpt1) (Mus musculus (Mouse)).